The chain runs to 442 residues: Trigger factor (442 aa).

The PPIase FKBP-type domain occupies 163–248 (GDQVVIDFLG…IKEVKAPKAA (86 aa)).

This sequence belongs to the FKBP-type PPIase family. Tig subfamily.

The protein resides in the cytoplasm. The enzyme catalyses [protein]-peptidylproline (omega=180) = [protein]-peptidylproline (omega=0). Functionally, involved in protein export. Acts as a chaperone by maintaining the newly synthesized protein in an open conformation. Functions as a peptidyl-prolyl cis-trans isomerase. In Dinoroseobacter shibae (strain DSM 16493 / NCIMB 14021 / DFL 12), this protein is Trigger factor.